The sequence spans 88 residues: Small ribosomal subunit protein uS15 (88 aa).

This sequence belongs to the universal ribosomal protein uS15 family. Part of the 30S ribosomal subunit. Forms a bridge to the 50S subunit in the 70S ribosome, contacting the 23S rRNA.

Functionally, one of the primary rRNA binding proteins, it binds directly to 16S rRNA where it helps nucleate assembly of the platform of the 30S subunit by binding and bridging several RNA helices of the 16S rRNA. Forms an intersubunit bridge (bridge B4) with the 23S rRNA of the 50S subunit in the ribosome. This is Small ribosomal subunit protein uS15 from Geobacter metallireducens (strain ATCC 53774 / DSM 7210 / GS-15).